A 413-amino-acid polypeptide reads, in one-letter code: MAP kinase-interacting serine/threonine-protein kinase 1 (413 aa).

Positions 1-26 are disordered; that stretch reads MGSSEPLPIVDSDKRRKKKRKTRATD. At T22 the chain carries Phosphothreonine; by PAK2. S27 carries the phosphoserine; by PAK2 modification. The Protein kinase domain maps to 37–321; it reads QLTSELLGEG…AAQVLQHPWV (285 aa). Residues 43 to 51 and K66 each bind ATP; that span reads LGEGAYAKV. The active-site Proton acceptor is D158. 2 positions are modified to phosphoserine: S168 and S173. 3 positions are modified to phosphothreonine: T197, T202, and T332.

The protein belongs to the protein kinase superfamily. CAMK Ser/Thr protein kinase family. In terms of assembly, interacts with the C-terminal regions of EIF4G1 and EIF4G2. Also binds to dephosphorylated ERK1 and ERK2, and to the p38 kinases. Requires Mg(2+) as cofactor. In terms of processing, dual phosphorylation of Thr-197 and Thr-202 activates the kinase. Phosphorylation of Thr-332 activates the kinase. MAPK3/ERK1 is one of the kinases which activate MKNK1/MNK1. Phosphorylation by PAK2 leads to a reduced phosphorylation of EIF4G1.

It carries out the reaction L-seryl-[protein] + ATP = O-phospho-L-seryl-[protein] + ADP + H(+). The enzyme catalyses L-threonyl-[protein] + ATP = O-phospho-L-threonyl-[protein] + ADP + H(+). Phosphorylated and activated by the p38 kinases and kinases in the Erk pathway. May play a role in the response to environmental stress and cytokines. Appears to regulate translation by phosphorylating EIF4E, thus increasing the affinity of this protein for the 7-methylguanosine-containing mRNA cap. This is MAP kinase-interacting serine/threonine-protein kinase 1 (Mknk1) from Rattus norvegicus (Rat).